The primary structure comprises 438 residues: uncharacterized protein (438 aa).

Histidine 59 is a binding site for Zn(2+). Glutamate 62 acts as the Proton acceptor in catalysis. Zn(2+) is bound by residues histidine 63 and glutamate 139.

The protein belongs to the peptidase M16 family. The cofactor is Zn(2+).

This is an uncharacterized protein from Mycobacterium tuberculosis (strain CDC 1551 / Oshkosh).